We begin with the raw amino-acid sequence, 248 residues long: UPF0246 protein RC0754 (248 aa).

It belongs to the UPF0246 family.

This chain is UPF0246 protein RC0754, found in Rickettsia conorii (strain ATCC VR-613 / Malish 7).